The chain runs to 477 residues: Proline--tRNA ligase (477 aa).

It belongs to the class-II aminoacyl-tRNA synthetase family. ProS type 3 subfamily. Homodimer.

It is found in the cytoplasm. It carries out the reaction tRNA(Pro) + L-proline + ATP = L-prolyl-tRNA(Pro) + AMP + diphosphate. Its function is as follows. Catalyzes the attachment of proline to tRNA(Pro) in a two-step reaction: proline is first activated by ATP to form Pro-AMP and then transferred to the acceptor end of tRNA(Pro). In Lachnoclostridium phytofermentans (strain ATCC 700394 / DSM 18823 / ISDg) (Clostridium phytofermentans), this protein is Proline--tRNA ligase.